The chain runs to 66 residues: Jindongenin-1a (66 aa).

Residues 1 to 22 form the signal peptide; it reads MFTLKKPLLLLFFLGTVSLSLC. Residues 23–40 constitute a propeptide that is removed on maturation; sequence EQERAADDDEGEVIEEEV. Residues Cys-60 and Cys-66 are joined by a disulfide bond.

Expressed by the skin glands.

The protein resides in the secreted. Functionally, displays broad-spectrum antibacterial activity against a range of Gram-positive and Gram-negative bacteria. Also displays antifungal activity against C.albicans ATCC 2002. Has low hemolytic activity, low cytotoxicity and low antioxidant activity. This Amolops jingdongensis (Chinese torrent frog) protein is Jindongenin-1a.